A 251-amino-acid chain; its full sequence is Ubiquinone/menaquinone biosynthesis C-methyltransferase UbiE (251 aa).

S-adenosyl-L-methionine-binding positions include T74, D95, 123–124, and S140; that span reads NA.

It belongs to the class I-like SAM-binding methyltransferase superfamily. MenG/UbiE family.

It catalyses the reaction a 2-demethylmenaquinol + S-adenosyl-L-methionine = a menaquinol + S-adenosyl-L-homocysteine + H(+). It carries out the reaction a 2-methoxy-6-(all-trans-polyprenyl)benzene-1,4-diol + S-adenosyl-L-methionine = a 5-methoxy-2-methyl-3-(all-trans-polyprenyl)benzene-1,4-diol + S-adenosyl-L-homocysteine + H(+). It participates in quinol/quinone metabolism; menaquinone biosynthesis; menaquinol from 1,4-dihydroxy-2-naphthoate: step 2/2. Its pathway is cofactor biosynthesis; ubiquinone biosynthesis. Its function is as follows. Methyltransferase required for the conversion of demethylmenaquinol (DMKH2) to menaquinol (MKH2) and the conversion of 2-polyprenyl-6-methoxy-1,4-benzoquinol (DDMQH2) to 2-polyprenyl-3-methyl-6-methoxy-1,4-benzoquinol (DMQH2). In Salmonella paratyphi A (strain AKU_12601), this protein is Ubiquinone/menaquinone biosynthesis C-methyltransferase UbiE.